The sequence spans 433 residues: 3-phosphoshikimate 1-carboxyvinyltransferase (433 aa).

3 residues coordinate 3-phosphoshikimate: Lys-22, Ser-23, and Arg-27. Residue Lys-22 coordinates phosphoenolpyruvate. The phosphoenolpyruvate site is built by Gly-95 and Arg-123. Residues Ser-166, Gln-168, Asp-314, and Lys-341 each contribute to the 3-phosphoshikimate site. Gln-168 serves as a coordination point for phosphoenolpyruvate. Residue Asp-314 is the Proton acceptor of the active site. Residues Arg-345 and Arg-386 each contribute to the phosphoenolpyruvate site.

This sequence belongs to the EPSP synthase family. In terms of assembly, monomer.

It is found in the cytoplasm. The enzyme catalyses 3-phosphoshikimate + phosphoenolpyruvate = 5-O-(1-carboxyvinyl)-3-phosphoshikimate + phosphate. The protein operates within metabolic intermediate biosynthesis; chorismate biosynthesis; chorismate from D-erythrose 4-phosphate and phosphoenolpyruvate: step 6/7. Catalyzes the transfer of the enolpyruvyl moiety of phosphoenolpyruvate (PEP) to the 5-hydroxyl of shikimate-3-phosphate (S3P) to produce enolpyruvyl shikimate-3-phosphate and inorganic phosphate. The sequence is that of 3-phosphoshikimate 1-carboxyvinyltransferase from Acidithiobacillus ferrooxidans (strain ATCC 23270 / DSM 14882 / CIP 104768 / NCIMB 8455) (Ferrobacillus ferrooxidans (strain ATCC 23270)).